The sequence spans 288 residues: Quinate/shikimate dehydrogenase (288 aa).

Lys-71 and Asp-107 together coordinate substrate. NAD(+)-binding positions include Ala-132–Ala-135, Asn-155–Asp-158, Lys-205, Cys-232–Asn-235, and Gly-255.

It belongs to the shikimate dehydrogenase family. In terms of assembly, homodimer.

The enzyme catalyses L-quinate + NAD(+) = 3-dehydroquinate + NADH + H(+). It catalyses the reaction L-quinate + NADP(+) = 3-dehydroquinate + NADPH + H(+). The catalysed reaction is shikimate + NADP(+) = 3-dehydroshikimate + NADPH + H(+). It carries out the reaction shikimate + NAD(+) = 3-dehydroshikimate + NADH + H(+). Its pathway is metabolic intermediate biosynthesis; chorismate biosynthesis; chorismate from D-erythrose 4-phosphate and phosphoenolpyruvate: step 4/7. Its function is as follows. The actual biological function of YdiB remains unclear, nor is it known whether 3-dehydroshikimate or quinate represents the natural substrate. Catalyzes the reversible NAD-dependent reduction of both 3-dehydroshikimate (DHSA) and 3-dehydroquinate to yield shikimate (SA) and quinate, respectively. It can use both NAD or NADP for catalysis, however it has higher catalytic efficiency with NAD. The protein is Quinate/shikimate dehydrogenase of Escherichia coli O7:K1 (strain IAI39 / ExPEC).